The chain runs to 296 residues: Giardin subunit alpha-2 (296 aa).

4 Annexin repeats span residues proline 2–phenylalanine 71, aspartate 73–tryptophan 143, glycine 153–alanine 223, and glycine 226–arginine 293.

The protein belongs to the annexin family. Giardin subunit alpha subfamily.

It localises to the cytoplasm. It is found in the cytoskeleton. Functionally, giardins are involved in parasite attachment to the intestinal mucosa and in the cytoskeletal disassembly and reassembly that marks the transition from infectious trophozoite to transmissible cyst. They may interact with other cytoskeletal proteins such as microtubules in the microribbons or crossbridges, to maintain the integrity of the ventral disk. This chain is Giardin subunit alpha-2, found in Giardia intestinalis (Giardia lamblia).